Reading from the N-terminus, the 94-residue chain is Probable Fe(2+)-trafficking protein (94 aa).

It belongs to the Fe(2+)-trafficking protein family.

Functionally, could be a mediator in iron transactions between iron acquisition and iron-requiring processes, such as synthesis and/or repair of Fe-S clusters in biosynthetic enzymes. This Alcanivorax borkumensis (strain ATCC 700651 / DSM 11573 / NCIMB 13689 / SK2) protein is Probable Fe(2+)-trafficking protein.